The following is a 275-amino-acid chain: 4-hydroxy-3-methylbut-2-enyl diphosphate reductase (275 aa).

Residue Cys12 participates in [4Fe-4S] cluster binding. Residues His40 and His70 each contribute to the (2E)-4-hydroxy-3-methylbut-2-enyl diphosphate site. Dimethylallyl diphosphate contacts are provided by His40 and His70. Isopentenyl diphosphate is bound by residues His40 and His70. Position 92 (Cys92) interacts with [4Fe-4S] cluster. His119 provides a ligand contact to (2E)-4-hydroxy-3-methylbut-2-enyl diphosphate. Residue His119 participates in dimethylallyl diphosphate binding. His119 contacts isopentenyl diphosphate. The active-site Proton donor is the Glu121. Thr151 provides a ligand contact to (2E)-4-hydroxy-3-methylbut-2-enyl diphosphate. Position 181 (Cys181) interacts with [4Fe-4S] cluster. 4 residues coordinate (2E)-4-hydroxy-3-methylbut-2-enyl diphosphate: Ser209, Ser210, Asn211, and Ser251. Residues Ser209, Ser210, Asn211, and Ser251 each contribute to the dimethylallyl diphosphate site. Isopentenyl diphosphate contacts are provided by Ser209, Ser210, Asn211, and Ser251.

This sequence belongs to the IspH family. [4Fe-4S] cluster is required as a cofactor.

It catalyses the reaction isopentenyl diphosphate + 2 oxidized [2Fe-2S]-[ferredoxin] + H2O = (2E)-4-hydroxy-3-methylbut-2-enyl diphosphate + 2 reduced [2Fe-2S]-[ferredoxin] + 2 H(+). It carries out the reaction dimethylallyl diphosphate + 2 oxidized [2Fe-2S]-[ferredoxin] + H2O = (2E)-4-hydroxy-3-methylbut-2-enyl diphosphate + 2 reduced [2Fe-2S]-[ferredoxin] + 2 H(+). It functions in the pathway isoprenoid biosynthesis; dimethylallyl diphosphate biosynthesis; dimethylallyl diphosphate from (2E)-4-hydroxy-3-methylbutenyl diphosphate: step 1/1. Its pathway is isoprenoid biosynthesis; isopentenyl diphosphate biosynthesis via DXP pathway; isopentenyl diphosphate from 1-deoxy-D-xylulose 5-phosphate: step 6/6. Catalyzes the conversion of 1-hydroxy-2-methyl-2-(E)-butenyl 4-diphosphate (HMBPP) into a mixture of isopentenyl diphosphate (IPP) and dimethylallyl diphosphate (DMAPP). Acts in the terminal step of the DOXP/MEP pathway for isoprenoid precursor biosynthesis. This chain is 4-hydroxy-3-methylbut-2-enyl diphosphate reductase, found in Thermotoga maritima (strain ATCC 43589 / DSM 3109 / JCM 10099 / NBRC 100826 / MSB8).